The primary structure comprises 133 residues: Small ribosomal subunit protein uS9 (133 aa).

A disordered region spans residues 102-133 (KPKGLLTRDPREVERKKYGLKKARRAPQFSKR). Residues 107–118 (LTRDPREVERKK) are compositionally biased toward basic and acidic residues. Positions 119–133 (YGLKKARRAPQFSKR) are enriched in basic residues.

This sequence belongs to the universal ribosomal protein uS9 family.

The sequence is that of Small ribosomal subunit protein uS9 from Deinococcus deserti (strain DSM 17065 / CIP 109153 / LMG 22923 / VCD115).